Consider the following 119-residue polypeptide: Large ribosomal subunit protein bL20 (119 aa).

Belongs to the bacterial ribosomal protein bL20 family.

Its function is as follows. Binds directly to 23S ribosomal RNA and is necessary for the in vitro assembly process of the 50S ribosomal subunit. It is not involved in the protein synthesizing functions of that subunit. The sequence is that of Large ribosomal subunit protein bL20 from Albidiferax ferrireducens (strain ATCC BAA-621 / DSM 15236 / T118) (Rhodoferax ferrireducens).